The chain runs to 264 residues: Type III pantothenate kinase 2 (264 aa).

6–13 contacts ATP; the sequence is DVGNTFTV. Substrate is bound by residues Tyr-100 and 107–110; that span reads GADR. Asp-109 acts as the Proton acceptor in catalysis. Asp-129 is a binding site for K(+). Thr-132 contacts ATP. Thr-184 contributes to the substrate binding site.

This sequence belongs to the type III pantothenate kinase family. In terms of assembly, homodimer. NH4(+) is required as a cofactor. The cofactor is K(+).

The protein resides in the cytoplasm. It carries out the reaction (R)-pantothenate + ATP = (R)-4'-phosphopantothenate + ADP + H(+). It functions in the pathway cofactor biosynthesis; coenzyme A biosynthesis; CoA from (R)-pantothenate: step 1/5. Its function is as follows. Catalyzes the phosphorylation of pantothenate (Pan), the first step in CoA biosynthesis. The protein is Type III pantothenate kinase 2 of Symbiobacterium thermophilum (strain DSM 24528 / JCM 14929 / IAM 14863 / T).